Reading from the N-terminus, the 293-residue chain is Nucleotide-binding protein DvMF_0424 (293 aa).

13–20 (GLSGAGKS) serves as a coordination point for ATP. Position 65–68 (65–68 (DLRE)) interacts with GTP.

It belongs to the RapZ-like family.

Its function is as follows. Displays ATPase and GTPase activities. The sequence is that of Nucleotide-binding protein DvMF_0424 from Nitratidesulfovibrio vulgaris (strain DSM 19637 / Miyazaki F) (Desulfovibrio vulgaris).